The following is a 519-amino-acid chain: U3 small nucleolar RNA-associated protein 15 homolog (519 aa).

Ala-2 carries the N-acetylalanine modification. 7 WD repeats span residues 36–75, 78–117, 120–159, 162–202, 204–242, 246–285, and 287–326; these read KEFG…PIKT, RFKD…PLRQ, GHTK…EILT, EHSD…SVIS, EHGQ…QLLV, NHHK…VVHS, and DYTA…KKDS. Lys-249 participates in a covalent cross-link: Glycyl lysine isopeptide (Lys-Gly) (interchain with G-Cter in SUMO2).

Part of the small subunit (SSU) processome, composed of more than 70 proteins and the RNA chaperone small nucleolar RNA (snoRNA) U3. May be a component of the proposed t-UTP subcomplex of the ribosomal small subunit (SSU) processome containing at least UTP4, WDR43, HEATR1, UTP15, WDR75. Interacts directly with UTP4 and WDR43.

Its subcellular location is the nucleus. It localises to the nucleolus. In terms of biological role, ribosome biogenesis factor. Involved in nucleolar processing of pre-18S ribosomal RNA. Required for optimal pre-ribosomal RNA transcription by RNA polymerase I. Part of the small subunit (SSU) processome, first precursor of the small eukaryotic ribosomal subunit. During the assembly of the SSU processome in the nucleolus, many ribosome biogenesis factors, an RNA chaperone and ribosomal proteins associate with the nascent pre-rRNA and work in concert to generate RNA folding, modifications, rearrangements and cleavage as well as targeted degradation of pre-ribosomal RNA by the RNA exosome. This Bos taurus (Bovine) protein is U3 small nucleolar RNA-associated protein 15 homolog.